Here is a 1969-residue protein sequence, read N- to C-terminus: Myosin-3 (1969 aa).

The region spanning 33–82 (DSKKNCWIPDPEDGFVAAEIQSTTGEQVTVVTVKGNQITVKKDQCQEMNP) is the Myosin N-terminal SH3-like domain. The 706-residue stretch at 86–791 (DKTEDMANLT…VLAKLEDLRD (706 aa)) folds into the Myosin motor domain. N6,N6,N6-trimethyllysine is present on K130. 179-186 (GESGAGKT) serves as a coordination point for ATP. 2 actin-binding regions span residues 667-689 (LNNL…IPNE) and 770-784 (KVGE…GVLA). An IQ domain is found at 794–823 (LSRIVTMFQSRIRSYLAKAEVRRRYEQQTG). A coiled-coil region spans residues 857–1969 (KEQEAMGELA…IRSSSNARFL (1113 aa)). Disordered stretches follow at residues 942-966 (MQER…TKKH), 1006-1029 (NKEK…EEDK), 1131-1213 (LEEE…GDSV), and 1234-1255 (KSKL…VRSR). Basic and acidic residues-rich tracts occupy residues 1137–1164 (AERN…ERLE) and 1176–1197 (ANKK…DSLN).

Belongs to the TRAFAC class myosin-kinesin ATPase superfamily. Myosin family. Muscle myosin is a hexameric protein that consists of 2 heavy chain subunits (MHC), 2 alkali light chain subunits (MLC) and 2 regulatory light chain subunits (MLC-2). In terms of tissue distribution, expressed in body wall muscles, neighboring vulval muscle cells and the contractile sheath covering the hermaphrodite gonad (myoepithelial sheath cells).

It localises to the cytoplasm. The protein resides in the myofibril. It is found in the sarcomere. The protein localises to the a band. Essential for muscle contraction. Involved in ovulation likely by regulating the contraction of gonadal myoepithelial sheath cells. In Caenorhabditis elegans, this protein is Myosin-3 (myo-3).